The following is a 98-amino-acid chain: MGGKGGKGGKGLGKVGAKKRHRRVIRENIQGITKPAIRRLARRGGVKRTLSGLVYDETRNVLKVFLENVVRDAVTYTEHARRKTVTALDVVYALKRQG.

Residues 1-14 (MGGKGGKGGKGLGK) are compositionally biased toward gly residues. A disordered region spans residues 1–20 (MGGKGGKGGKGLGKVGAKKR).

Belongs to the histone H4 family. As to quaternary structure, the nucleosome is a histone octamer containing two molecules each of H2A, H2B, H3 and H4 assembled in one H3-H4 heterotetramer and two H2A-H2B heterodimers. The octamer wraps approximately 147 bp of DNA.

The protein localises to the nucleus. It is found in the chromosome. Its function is as follows. Core component of nucleosome. Nucleosomes wrap and compact DNA into chromatin, limiting DNA accessibility to the cellular machineries which require DNA as a template. Histones thereby play a central role in transcription regulation, DNA repair, DNA replication and chromosomal stability. DNA accessibility is regulated via a complex set of post-translational modifications of histones, also called histone code, and nucleosome remodeling. This is Histone H4-1 from Blepharisma japonicum.